Here is an 82-residue protein sequence, read N- to C-terminus: Small ribosomal subunit protein eS21y (82 aa).

An N-acetylmethionine modification is found at Met1.

It belongs to the eukaryotic ribosomal protein eS21 family.

This Arabidopsis thaliana (Mouse-ear cress) protein is Small ribosomal subunit protein eS21y (RPS21C).